The following is a 411-amino-acid chain: MTYPDPTLFGHDPWWLVLAKSLGIFAFLLLTVLAAILIERKVLGRMQLRFGPNRVGPHGLLQSLADGVKLALKEGLVPAGVDKWIYLAAPIISVIPAFMAFAVIPMGGEVSVFGHRTALQLTDLPVAVLYILAVTSIGVYGIVLAGWASGSVYPLLGGLRSSAQVISYEIAMALSFAAVFIYAGTMSTSGIVAAQNDTWYIVLLLPSFLVYVTAMVGETNRAPFDLPEAEGELVGGFHTEYSSLKFAMFMLAEYVNMTTVSALATTLFLGGWHAPWPISIADGANSGWWPLLWFTVKVWLFLFFFMWLRATLPRMRYDQFMALGWKILIPVSLGWIMIVAITHSLRDQGYQAPATAAIGLAVAAVILLALLGRSRLRARRIRPEPIRPAGDGAFPVPPLPVKTRALEDADA.

The next 9 membrane-spanning stretches (helical) occupy residues 18–38 (LAKS…AILI), 84–104 (WIYL…FAVI), 124–144 (LPVA…GIVL), 165–185 (VISY…YAGT), 198–218 (TWYI…MVGE), 260–280 (VSAL…PISI), 288–308 (WWPL…FMWL), 321–341 (MALG…IVAI), and 352–372 (APAT…ALLG).

Belongs to the complex I subunit 1 family. NDH-1 is composed of 14 different subunits. Subunits NuoA, H, J, K, L, M, N constitute the membrane sector of the complex.

The protein localises to the cell membrane. The enzyme catalyses a quinone + NADH + 5 H(+)(in) = a quinol + NAD(+) + 4 H(+)(out). Its function is as follows. NDH-1 shuttles electrons from NADH, via FMN and iron-sulfur (Fe-S) centers, to quinones in the respiratory chain. The immediate electron acceptor for the enzyme in this species is believed to be menaquinone. Couples the redox reaction to proton translocation (for every two electrons transferred, four hydrogen ions are translocated across the cytoplasmic membrane), and thus conserves the redox energy in a proton gradient. This subunit may bind ubiquinone. This is NADH-quinone oxidoreductase subunit H from Mycolicibacterium vanbaalenii (strain DSM 7251 / JCM 13017 / BCRC 16820 / KCTC 9966 / NRRL B-24157 / PYR-1) (Mycobacterium vanbaalenii).